The chain runs to 588 residues: Outer membrane transporter CdiB (588 aa).

Positions 104 to 179 constitute a POTRA domain; sequence FTVSSIVVSG…GVLHITVMEG (76 aa).

The protein belongs to the TPS (TC 1.B.20) family.

The protein resides in the cell outer membrane. In terms of biological role, potential outer membrane protein component of a toxin-immunity protein module, which functions as a cellular contact-dependent growth inhibition (CDI) system. CDI modules allow bacteria to communicate with and inhibit the growth of closely related neighboring bacteria in a contact-dependent fashion. This protein may be required for secretion and assembly of the CdiA toxin protein. Inhibitory cells must be in logarithmic (not stationary) phase to inhibit growth of their targets, while the presence of P or S but not type 1 pili protects the target cells against growth inhibition. Functionally, probable member of a two partner secretion pathway (TPS) in which it mediates the secretion of CdiA. This is Outer membrane transporter CdiB from Escherichia coli.